We begin with the raw amino-acid sequence, 458 residues long: ATP synthase subunit beta (458 aa).

Residue 148-155 (GGAGVGKT) coordinates ATP.

The protein belongs to the ATPase alpha/beta chains family. F-type ATPases have 2 components, CF(1) - the catalytic core - and CF(0) - the membrane proton channel. CF(1) has five subunits: alpha(3), beta(3), gamma(1), delta(1), epsilon(1). CF(0) has three main subunits: a(1), b(2) and c(9-12). The alpha and beta chains form an alternating ring which encloses part of the gamma chain. CF(1) is attached to CF(0) by a central stalk formed by the gamma and epsilon chains, while a peripheral stalk is formed by the delta and b chains.

Its subcellular location is the cell inner membrane. The catalysed reaction is ATP + H2O + 4 H(+)(in) = ADP + phosphate + 5 H(+)(out). Produces ATP from ADP in the presence of a proton gradient across the membrane. The catalytic sites are hosted primarily by the beta subunits. This is ATP synthase subunit beta from Francisella tularensis subsp. tularensis (strain FSC 198).